The following is a 55-amino-acid chain: Large ribosomal subunit protein bL33 (55 aa).

Belongs to the bacterial ribosomal protein bL33 family.

This chain is Large ribosomal subunit protein bL33, found in Methylobacterium sp. (strain 4-46).